A 328-amino-acid chain; its full sequence is Acyl-CoA wax alcohol acyltransferase 1 (328 aa).

Transmembrane regions (helical) follow at residues 12–32 (SLSL…VQPL) and 34–53 (ICLL…VWLL).

The protein belongs to the diacylglycerol acyltransferase family.

The protein localises to the endoplasmic reticulum membrane. It carries out the reaction a long chain fatty alcohol + a fatty acyl-CoA = a wax ester + CoA. The enzyme catalyses 1,2-di-(9Z-octadecenoyl)-sn-glycerol + (9Z)-octadecenoyl-CoA = 1,2,3-tri-(9Z-octadecenoyl)-glycerol + CoA. The catalysed reaction is hexadecan-1-ol + (9Z)-octadecenoyl-CoA = hexadecanyl (9Z)-octadecenoate + CoA. It catalyses the reaction decan-1-ol + (9Z)-octadecenoyl-CoA = 1-O-decyl-(9Z)-octadecenoate + CoA. It carries out the reaction (9Z)-hexadecen-1-ol + (9Z)-octadecenoyl-CoA = 1-O-(9Z)-hexadecenyl (9Z)-octadecenoate + CoA. The enzyme catalyses octadecan-1-ol + (9Z)-octadecenoyl-CoA = 1-O-octadecyl (9Z)-octadecenoate + CoA. The catalysed reaction is (9Z)-octadecen-1-ol + (9Z)-octadecenoyl-CoA = 1-O-(9Z)-octadecenyl (9Z)-octadecenoate + CoA. It catalyses the reaction hexadecan-1-ol + hexadecanoyl-CoA = hexadecanyl hexadecanoate + CoA. It carries out the reaction hexadecan-1-ol + (9Z)-hexadecenoyl-CoA = 1-O-hexadecyl (9Z)-hexadecenoate + CoA. The enzyme catalyses hexadecan-1-ol + octadecanoyl-CoA = hexadecanyl octadecanoate + CoA. The catalysed reaction is eicosan-1-ol + (9Z)-octadecenoyl-CoA = 1-O-eicosanyl (9Z)-octadecenoate + CoA. Functionally, acyltransferase that catalyzes the formation of ester bonds between fatty alcohols and fatty acyl-CoAs to form wax monoesters. Shows a strong preference for decyl alcohol (C10), with less activity towards C16 and C18 alcohols. Shows a strong preference for saturated acyl-CoAs. The sequence is that of Acyl-CoA wax alcohol acyltransferase 1 (Awat1) from Mus musculus (Mouse).